A 180-amino-acid polypeptide reads, in one-letter code: Glycoprotein Xg (180 aa).

The N-terminal stretch at 1-21 is a signal peptide; that stretch reads MESWWGLPCLAFLCFLMHARG. The Extracellular segment spans residues 22–142; sequence QRDFDLADAL…GNPEGNMVAK (121 aa). The tract at residues 28-133 is disordered; sequence ADALDDPEPT…HGGDHHSTYG (106 aa). Positions 47–57 are enriched in pro residues; that stretch reads KPKPPYYPQPE. A helical membrane pass occupies residues 143-163; the sequence is IVSPIVSVVVVTLLGAAASYF. Residues 164-180 lie on the Cytoplasmic side of the membrane; the sequence is KLNNRRNCFRTHEPENV.

Belongs to the CD99 family. Post-translationally, O-glycosylated. Expressed in erythroid tissues, including thymus, bone marrow and fetal liver, and in several nonerythroid tissues, such as heart, placenta, skeletal muscle, thyroid and trachea, as well as in skin fibroblasts. Expression is low or undetectable in other tissues.

Its subcellular location is the cell membrane. The protein is Glycoprotein Xg (XG) of Homo sapiens (Human).